A 249-amino-acid polypeptide reads, in one-letter code: U2 small nuclear ribonucleoprotein A' (249 aa).

LRR repeat units lie at residues 20 to 41, 43 to 64, 65 to 87, and 89 to 110; these read KERE…GATE, QFDT…PYLN, RLGT…GEFL, and KLHS…DPLA. The LRRCT domain occupies 123–161; the sequence is NNITKKANYRLYVIHKLKSLRVLDFIKIKAKERAEAASL.

The protein belongs to the U2 small nuclear ribonucleoprotein A family.

Its subcellular location is the nucleus. It is found in the nucleus speckle. This protein is associated with sn-RNP U2. It helps the A' protein to bind stem loop IV of U2 snRNA. This Arabidopsis thaliana (Mouse-ear cress) protein is U2 small nuclear ribonucleoprotein A'.